The following is a 123-amino-acid chain: Probable non-functional immunoglobulin lambda variable 11-55 (123 aa).

The N-terminal stretch at M1–S19 is a signal peptide. Positions R20–S44 are framework-1. The Ig-like domain maps to P21–N123. Residues C41 and C115 are joined by a disulfide bond. Residues S45–N53 form a complementarity-determining-1 region. Residues M54–Y70 form a framework-2 region. Residues H71–K77 form a complementarity-determining-2 region. Residues Q78–C115 form a framework-3 region. Positions Q116 to N123 are complementarity-determining-3.

Immunoglobulins are composed of two identical heavy chains and two identical light chains; disulfide-linked.

It is found in the secreted. The protein localises to the cell membrane. Its function is as follows. Probable non-functional open reading frame (ORF) of V region of the variable domain of immunoglobulin light chains. Non-functional ORF generally cannot participate in the synthesis of a productive immunoglobulin chain due to altered V-(D)-J or switch recombination and/or splicing site (at mRNA level) and/or conserved amino acid change (protein level). Immunoglobulins, also known as antibodies, are membrane-bound or secreted glycoproteins produced by B lymphocytes. In the recognition phase of humoral immunity, the membrane-bound immunoglobulins serve as receptors which, upon binding of a specific antigen, trigger the clonal expansion and differentiation of B lymphocytes into immunoglobulins-secreting plasma cells. Secreted immunoglobulins mediate the effector phase of humoral immunity, which results in the elimination of bound antigens. The antigen binding site is formed by the variable domain of one heavy chain, together with that of its associated light chain. Thus, each immunoglobulin has two antigen binding sites with remarkable affinity for a particular antigen. The variable domains are assembled by a process called V-(D)-J rearrangement and can then be subjected to somatic hypermutations which, after exposure to antigen and selection, allow affinity maturation for a particular antigen. This chain is Probable non-functional immunoglobulin lambda variable 11-55, found in Homo sapiens (Human).